The primary structure comprises 404 residues: Type I restriction enzyme EcoR124I/EcoR124II specificity subunit (404 aa).

The segment at 1–153 (MSEMSYLEKL…PIPCPDNPEK (153 aa)) is target-recognition domain 1. Positions 154–199 (SLAIQSEIVRILDKFTALTAELTAELNMRKKQYNYYRDQLLSFKEG) are conserved region 1. The interval 200-349 (EVEWKTLGEI…KLFSFKIPVP (150 aa)) is target-recognition domain 2. The tract at residues 350 to 404 (NINEQQRIVEILDKFDTLTNSITEGLPREIELRQKQYEYYRDLLFSFPKPETVSN) is conserved region 2.

This sequence belongs to the type-I restriction system S methylase family. As to quaternary structure, the type I restriction/modification system is composed of three polypeptides R, M and S; the restriction enzyme has stoichiometry R(2)M(2)S(1) while the methyltransferase is M(2)S(1). There is an equilibrium between R(2)M(2)S(1) and R(1)M(2)S(1); the latter is methylation and translocation proficient but restriction deficient. In terms of assembly, (Microbial infection) Holoenenzyme interacts with Escherichia phage T7 protein Ocr; this interaction leads to the inhibition of the restriction activity, but may still allow methylation and translocation.

Functionally, the specificity (S) subunit of a type I restriction enzyme; this subunit dictates DNA sequence specificity. The presence or absence of a 4-residue repeat changes the sequence specificity; a third copy of TAEL inserted at position 179-180 changes the recognition site from 5'-GAAN(6)RTCG-3' (for EcoR124I) to 5'-GAAN(7)RTCG-3' (for EcoR124II). The M and S subunits together form a methyltransferase (MTase) that methylates A-3 on the top and bottom strand of the sequence 5'-GAAN(7)RTCG-3'. In the presence of the R subunit the complex can also act as an endonuclease, binding to the same target sequence but cutting the DNA some distance from this site. Whether the DNA is cut or modified depends on the methylation state of the target sequence. When the target site is unmodified, the DNA is cut. When the target site is hemimethylated, the complex acts as a maintenance MTase modifying the DNA so that both strands become methylated. After locating a non-methylated recognition site, the enzyme complex serves as a molecular motor that translocates DNA in an ATP-dependent manner until a collision occurs that triggers cleavage. The R(1)M(2)S(1) complex translocates an average of 555 bp/second on nicked DNA; the R(2)M(2)S(1) complex translocates at double that speed. The 2 R subunit motors are independent and track along the helical pitch of the DNA, inducing positive supercoiling ahead of themselves. This chain is Type I restriction enzyme EcoR124I/EcoR124II specificity subunit (hsdS), found in Escherichia coli.